Reading from the N-terminus, the 376-residue chain is Proton extrusion protein PxcA (376 aa).

Helical transmembrane passes span 150 to 170, 251 to 271, 299 to 319, and 334 to 354; these read TLIS…VQQM, AVKN…VCII, IILF…QVLL, and FILL…KYWI.

Belongs to the CemA family.

The protein localises to the cell inner membrane. Its function is as follows. Required for H(+) efflux immediately after light irradiation to form a rapid H(+) concentration gradient across the thylakoid membranes. Together with PxcL, contributes to transient H(+) uptake following dark to light transition. This is Proton extrusion protein PxcA from Prochlorococcus marinus (strain MIT 9303).